The primary structure comprises 938 residues: Probable glutamyl endopeptidase, chloroplastic (938 aa).

Residues 1–54 (MSSLTILLQRACLRFALLPVPPLRAPLRPPRRPLGLPRRSAMSSSAASRLSHIV) constitute a chloroplast transit peptide. The span at 58-76 (GGAAGESSEPPAAAAAASG) shows a compositional bias: low complexity. Residues 58–77 (GGAAGESSEPPAAAAAASGL) are disordered. Active-site charge relay system residues include S762, D836, and H870. Residues 897-913 (SSKTDSDSVADTENKTV) are compositionally biased toward polar residues. Positions 897 to 938 (SSKTDSDSVADTENKTVSASGGGAPCEGPEAEGFSSMQRSLL) are disordered.

Belongs to the peptidase S9D family.

It is found in the plastid. The protein localises to the chloroplast stroma. In terms of biological role, serine-type protease active in vitro against the LHCII N-terminal. Cleaves its substrate on the carboxy-side of Glu residues. The protein is Probable glutamyl endopeptidase, chloroplastic (GEP) of Oryza sativa subsp. japonica (Rice).